Here is a 359-residue protein sequence, read N- to C-terminus: Fructose-bisphosphate aldolase (359 aa).

Ser50 lines the D-glyceraldehyde 3-phosphate pocket. Asp83 acts as the Proton donor in catalysis. Zn(2+) contacts are provided by His84, Asp105, Glu142, and His198. Position 199 (Gly199) interacts with dihydroxyacetone phosphate. His232 contacts Zn(2+). Dihydroxyacetone phosphate contacts are provided by residues 233–235 and 275–278; these read GSS and NIDT.

Zn(2+) is required as a cofactor.

The catalysed reaction is beta-D-fructose 1,6-bisphosphate = D-glyceraldehyde 3-phosphate + dihydroxyacetone phosphate. Its pathway is carbohydrate degradation; glycolysis; D-glyceraldehyde 3-phosphate and glycerone phosphate from D-glucose: step 4/4. Catalyzes the aldol condensation of dihydroxyacetone phosphate (DHAP or glycerone-phosphate) with glyceraldehyde 3-phosphate (G3P) to form fructose 1,6-bisphosphate (FBP) in gluconeogenesis and the reverse reaction in glycolysis. This is Fructose-bisphosphate aldolase from Nostoc sp. (strain PCC 7120 / SAG 25.82 / UTEX 2576).